A 348-amino-acid polypeptide reads, in one-letter code: Structural glycoprotein p40 (348 aa).

It belongs to the baculoviridae gp41 family. In terms of processing, O-glycosylated; contains N-acetylglucosamine side chains.

In Bombyx mori nuclear polyhedrosis virus (BmNPV), this protein is Structural glycoprotein p40 (P40).